We begin with the raw amino-acid sequence, 434 residues long: Trigger factor (434 aa).

A PPIase FKBP-type domain is found at 161–246 (EDRATLDFTG…LKKVEVRELP (86 aa)).

Belongs to the FKBP-type PPIase family. Tig subfamily.

It is found in the cytoplasm. The enzyme catalyses [protein]-peptidylproline (omega=180) = [protein]-peptidylproline (omega=0). In terms of biological role, involved in protein export. Acts as a chaperone by maintaining the newly synthesized protein in an open conformation. Functions as a peptidyl-prolyl cis-trans isomerase. This is Trigger factor from Yersinia pseudotuberculosis serotype O:1b (strain IP 31758).